The following is a 318-amino-acid chain: MSLTLSELQIRTLKQTLESSKIPFKSEVRLDILSSFKIGGICPVVVEPENSNQVLETLFIFHKSEIPWKILGGGSNLLISDHPDNFVTLRLSGKFKEFEYLEGGKFRIGSATNTTPTFRQISQLGYTGAEFLSTIPGWTGGAVIQNAGCYGGELFDLIQTVEFLRNNEIFVRSPSEIKHGYRFTEFLNEKDSIILGIEILLKEGNLEEIQTSLKDKRDRRNSSQPENKKSAGSVFKNPKIFLENGKEIKAWELIDQAGLRGQIKGGAQISPEHCNFIVNVGAATAADVNYLVELILDKVFQTTGIRLNREIEYFGDIP.

An FAD-binding PCMH-type domain is found at 38–204 (IGGICPVVVE…LGIEILLKEG (167 aa)). Residue Arg-182 is part of the active site. Residues 212 to 232 (SLKDKRDRRNSSQPENKKSAG) are disordered. Basic and acidic residues predominate over residues 213-229 (LKDKRDRRNSSQPENKK). The Proton donor role is filled by Ser-233. Glu-310 is a catalytic residue.

It belongs to the MurB family. FAD is required as a cofactor.

It localises to the cytoplasm. It carries out the reaction UDP-N-acetyl-alpha-D-muramate + NADP(+) = UDP-N-acetyl-3-O-(1-carboxyvinyl)-alpha-D-glucosamine + NADPH + H(+). The protein operates within cell wall biogenesis; peptidoglycan biosynthesis. Functionally, cell wall formation. This is UDP-N-acetylenolpyruvoylglucosamine reductase from Leptospira borgpetersenii serovar Hardjo-bovis (strain JB197).